Here is a 347-residue protein sequence, read N- to C-terminus: Quinolinate synthase (347 aa).

Iminosuccinate contacts are provided by His47 and Ser68. Cys113 is a binding site for [4Fe-4S] cluster. Residues 139-141 (YAN) and Ser156 contribute to the iminosuccinate site. Position 200 (Cys200) interacts with [4Fe-4S] cluster. Residues 226–228 (HPE) and Thr243 each bind iminosuccinate. Cys297 is a binding site for [4Fe-4S] cluster.

The protein belongs to the quinolinate synthase family. Type 1 subfamily. [4Fe-4S] cluster is required as a cofactor.

It localises to the cytoplasm. The enzyme catalyses iminosuccinate + dihydroxyacetone phosphate = quinolinate + phosphate + 2 H2O + H(+). The protein operates within cofactor biosynthesis; NAD(+) biosynthesis; quinolinate from iminoaspartate: step 1/1. Catalyzes the condensation of iminoaspartate with dihydroxyacetone phosphate to form quinolinate. In Salmonella heidelberg (strain SL476), this protein is Quinolinate synthase.